The sequence spans 126 residues: Lymphocyte antigen 6E (126 aa).

A signal peptide spans 1 to 20 (MKAFLFAVLAAVLCVERAHT). The 78-residue stretch at 21–98 (LICFSCSDAS…CCDSFLCNIS (78 aa)) folds into the UPAR/Ly6 domain. Intrachain disulfides connect cysteine 23-cysteine 48, cysteine 26-cysteine 35, cysteine 41-cysteine 69, cysteine 73-cysteine 89, and cysteine 90-cysteine 95. Asparagine 96 carries an N-linked (GlcNAc...) asparagine glycan. Serine 98 carries GPI-anchor amidated serine lipidation. Residues 99–126 (GSSSVKASYAVLALGILVSFVYVLRARE) constitute a propeptide, removed in mature form.

In terms of tissue distribution, expressed by thymic blast cells.

The protein resides in the cell membrane. In Gallus gallus (Chicken), this protein is Lymphocyte antigen 6E (LY6E).